Here is a 425-residue protein sequence, read N- to C-terminus: Serine--tRNA ligase (425 aa).

Position 230 to 232 (230 to 232) interacts with L-serine; it reads TAE. Position 261–263 (261–263) interacts with ATP; that stretch reads RAE. Glu-284 serves as a coordination point for L-serine. 348–351 lines the ATP pocket; that stretch reads EISS. L-serine is bound at residue Ser-384.

It belongs to the class-II aminoacyl-tRNA synthetase family. Type-1 seryl-tRNA synthetase subfamily. Homodimer. The tRNA molecule binds across the dimer.

Its subcellular location is the cytoplasm. It catalyses the reaction tRNA(Ser) + L-serine + ATP = L-seryl-tRNA(Ser) + AMP + diphosphate + H(+). The enzyme catalyses tRNA(Sec) + L-serine + ATP = L-seryl-tRNA(Sec) + AMP + diphosphate + H(+). It participates in aminoacyl-tRNA biosynthesis; selenocysteinyl-tRNA(Sec) biosynthesis; L-seryl-tRNA(Sec) from L-serine and tRNA(Sec): step 1/1. Catalyzes the attachment of serine to tRNA(Ser). Is also able to aminoacylate tRNA(Sec) with serine, to form the misacylated tRNA L-seryl-tRNA(Sec), which will be further converted into selenocysteinyl-tRNA(Sec). This is Serine--tRNA ligase from Desulforudis audaxviator (strain MP104C).